The primary structure comprises 313 residues: MTSAPLAARLSIPSGPLFFPVTAYRPDGALNLDVYREHVRRGVEAGAAAVFACCGTGEFHALAPEEFERCVGAAVEETAGRVPVVAGAGYGTALAVRFARLAQDAGADGLLAMPPYLVVAGQEGLLRHYRELAAATSLETIVYQRDNAVFTPEAVVELARTDGIIGFKDGLGDLDLMQRVVSAVRTEVPGDFLYFNGLPTAELTGLAYRGIGITLYSSAVFCFAPEIALAFHKALNSGDDATVNRLLDGFYRPFVDLRAQGRGYAVSLVKAGVRLRGLDVGEVRPPLHEPTEDHVKQLAQLVDRGYALLQEGM.

Belongs to the DapA family.

It carries out the reaction 5-dehydro-4-deoxy-D-glucarate + H(+) = 2,5-dioxopentanoate + CO2 + H2O. It functions in the pathway carbohydrate acid metabolism; D-glucarate degradation; 2,5-dioxopentanoate from D-glucarate: step 2/2. The sequence is that of Probable 5-dehydro-4-deoxyglucarate dehydratase 1 from Streptomyces avermitilis (strain ATCC 31267 / DSM 46492 / JCM 5070 / NBRC 14893 / NCIMB 12804 / NRRL 8165 / MA-4680).